Here is a 141-residue protein sequence, read N- to C-terminus: Period circadian protein (141 aa).

Residues 1–141 (EGSGGSGSSG…VTLTESLLNK (141 aa)) form a disordered region. Residues 11-23 (HFTTGSNVHMSSV) are compositionally biased toward polar residues. Gly residues predominate over residues 29–68 (GGTGGTGTGTGTGTGTGTGTGTGTGTGTGTGTGTGTGTGT). A run of 19 repeats spans residues 30–31 (GT), 33–34 (GT), 35–36 (GT), 37–38 (GT), 39–40 (GT), 41–42 (GT), 43–44 (GT), 45–46 (GT), 47–48 (GT), 49–50 (GT), 51–52 (GT), 53–54 (GT), 55–56 (GT), 57–58 (GT), 59–60 (GT), 61–62 (GT), 63–64 (GT), 65–66 (GT), and 67–68 (GT). Residues 30–94 (GTGGTGTGTG…ANGTGTGKGT (65 aa)) are 32 X 2 AA approximate tandem repeats of G-T. The 20; approximate repeat unit spans residues 69–70 (AS). Positions 69–85 (ASGTATGTASGTATGTA) are enriched in low complexity. The stretch at 71–72 (GT) is repeat 21. One copy of the 22; approximate repeat lies at 73–74 (AT). Repeat unit 23 spans residues 75–76 (GT). Residues 77-78 (AS) form a 24; approximate repeat. Repeat 25 spans residues 79–80 (GT). One copy of the 26; approximate repeat lies at 81–82 (AT). The stretch at 83-84 (GT) is repeat 27. The stretch at 85–86 (AN) is one 28; approximate repeat. 2 tandem repeats follow at residues 87-88 (GT) and 89-90 (GT). Residues 91–92 (GK) form a 31; approximate repeat. Copy 32 of the repeat occupies 93–94 (GT). The segment covering 101–113 (SGSGSGTGTGTGT) has biased composition (gly residues). The segment covering 114 to 129 (GTTTTTTTGNNSSSST) has biased composition (low complexity). The segment covering 130 to 141 (PPVTLTESLLNK) has biased composition (polar residues).

As to quaternary structure, forms a heterodimer with timeless (TIM); the complex then translocates into the nucleus. Phosphorylated with a circadian rhythmicity, probably by the double-time protein (dbt). Phosphorylation could be implicated in the stability of per monomer and in the formation of heterodimer per-tim.

It is found in the nucleus. The protein resides in the cytoplasm. Its subcellular location is the perinuclear region. Functionally, essential for biological clock functions. Determines the period length of circadian and ultradian rhythms; an increase in PER dosage leads to shortened circadian rhythms and a decrease leads to lengthened circadian rhythms. Essential for the circadian rhythmicity of locomotor activity, eclosion behavior, and for the rhythmic component of the male courtship song that originates in the thoracic nervous system. The biological cycle depends on the rhythmic formation and nuclear localization of the TIM-PER complex. Light induces the degradation of TIM, which promotes elimination of PER. Nuclear activity of the heterodimer coordinatively regulates PER and TIM transcription through a negative feedback loop. Behaves as a negative element in circadian transcriptional loop. Does not appear to bind DNA, suggesting indirect transcriptional inhibition. The polypeptide is Period circadian protein (per) (Drosophila serrata (Fruit fly)).